We begin with the raw amino-acid sequence, 439 residues long: Xylose isomerase (439 aa).

Active-site residues include His-101 and Asp-104. Mg(2+) is bound by residues Glu-232, Glu-268, His-271, Asp-296, Asp-307, Asp-309, and Asp-339.

The protein belongs to the xylose isomerase family. As to quaternary structure, homotetramer. The cofactor is Mg(2+).

Its subcellular location is the cytoplasm. The catalysed reaction is alpha-D-xylose = alpha-D-xylulofuranose. The polypeptide is Xylose isomerase (Yersinia pestis bv. Antiqua (strain Angola)).